Reading from the N-terminus, the 267-residue chain is Interleukin-1 alpha (267 aa).

Positions methionine 1–arginine 112 are excised as a propeptide. N-linked (GlcNAc...) asparagine glycosylation is present at asparagine 64. Position 82 is an N6-acetyllysine (lysine 82). Positions lysine 82 to leucine 86 are nuclear localization signal (NLS). Residue serine 87 is modified to Phosphoserine. N-linked (GlcNAc...) asparagine glycans are attached at residues asparagine 100 and asparagine 141.

It belongs to the IL-1 family. Monomer. Interacts with TMED10; the interaction mediates the translocation from the cytoplasm into the ERGIC (endoplasmic reticulum-Golgi intermediate compartment) and thereby secretion. Interacts with IL1R1. Interacts with S100A13; this interaction is the first step in the export of IL1A, followed by direct translocation of this complex across the plasma membrane. Acetylated within its nuclear localization sequence, which impacts subcellular localization. Post-translationally, proteolytic processed by CAPN1 in a calcium-dependent manner. Cleavage from 31 kDa precursor to 18 kDa biologically active molecules. In terms of processing, phosphorylated. Phosphorylation greatly enhances susceptibility to digestion and promotes the conversion of pre-IL1A alpha to the biologically active IL1A.

The protein resides in the nucleus. Its subcellular location is the cytoplasm. It localises to the secreted. Cytokine constitutively present intracellularly in nearly all resting non-hematopoietic cells that plays an important role in inflammation and bridges the innate and adaptive immune systems. After binding to its receptor IL1R1 together with its accessory protein IL1RAP, forms the high affinity interleukin-1 receptor complex. Signaling involves the recruitment of adapter molecules such as MYD88, IRAK1 or IRAK4. In turn, mediates the activation of NF-kappa-B and the three MAPK pathways p38, p42/p44 and JNK pathways. Within the cell, acts as an alarmin and cell death results in its liberation in the extracellular space after disruption of the cell membrane to induce inflammation and alert the host to injury or damage. In addition to its role as a danger signal, which occurs when the cytokine is passively released by cell necrosis, directly senses DNA damage and acts as signal for genotoxic stress without loss of cell integrity. The sequence is that of Interleukin-1 alpha (IL1A) from Oryctolagus cuniculus (Rabbit).